A 154-amino-acid polypeptide reads, in one-letter code: Endoribonuclease YbeY (154 aa).

Zn(2+)-binding residues include His114, His118, and His124.

Belongs to the endoribonuclease YbeY family. The cofactor is Zn(2+).

The protein localises to the cytoplasm. Its function is as follows. Single strand-specific metallo-endoribonuclease involved in late-stage 70S ribosome quality control and in maturation of the 3' terminus of the 16S rRNA. This Anaplasma phagocytophilum (strain HZ) protein is Endoribonuclease YbeY.